The primary structure comprises 103 residues: Photosystem II 5 kDa protein, chloroplastic (103 aa).

Residues 1-75 (MASMTMTATF…LAKVAMAEEE (75 aa)) constitute a chloroplast transit peptide.

In terms of processing, the maturation of the PSII-T precursor to its final form occurs through a two step process. First, a stromal intermediate is formed, which, upon translocation into the thylakoid membrane, is processed to the mature protein.

It localises to the plastid. It is found in the chloroplast thylakoid membrane. Its function is as follows. May be a component of the oxygen-evolving complex. The polypeptide is Photosystem II 5 kDa protein, chloroplastic (PSBT) (Arabidopsis thaliana (Mouse-ear cress)).